A 576-amino-acid chain; its full sequence is Putative export ATP-binding/permease protein RT0691 (576 aa).

In terms of domain architecture, ABC transmembrane type-1 spans 20-303 (LIIVMISLLS…IFELLSEIHL (284 aa)). 6 helical membrane-spanning segments follow: residues 21 to 41 (IIVM…GSVF), 61 to 81 (ILYI…RSYF), 135 to 155 (FLSF…LMFF), 158 to 178 (FKLA…LIKF), 242 to 262 (ALFF…IVWI), and 277 to 297 (IISF…IFEL). One can recognise an ABC transporter domain in the interval 336–572 (IEFKNVDFTY…SEIYRNICRE (237 aa)). 371-378 (GRSGAGKS) is an ATP binding site.

The protein belongs to the ABC transporter superfamily. As to quaternary structure, homodimer.

It is found in the cell inner membrane. Functionally, part of an ABC transporter complex. Transmembrane domains (TMD) form a pore in the inner membrane and the ATP-binding domain (NBD) is responsible for energy generation. The polypeptide is Putative export ATP-binding/permease protein RT0691 (Rickettsia typhi (strain ATCC VR-144 / Wilmington)).